A 114-amino-acid chain; its full sequence is Protein S100-A9 (114 aa).

At Thr2 the chain carries Blocked amino end (Thr). Cys3 carries the S-nitrosocysteine; transient modification. EF-hand domains follow at residues 12–47 and 54–89; these read IETIINTFHQYSVKLGHPDTLNQGEFKELVRKDLQN and KNEKVIEHIMEDLDTNADKQLSFEEFIMLMARLTWA. His20 is a binding site for Zn(2+). Residues Ser23, Leu26, and His28 each coordinate Ca(2+). Asp30 provides a ligand contact to Zn(2+). Thr31, Glu36, Asp67, Asn69, Asp71, Gln73, and Glu78 together coordinate Ca(2+). The Zn(2+) site is built by His91 and His95. Residues 93–102 show a composition bias toward basic and acidic residues; the sequence is KMHEGDEGPG. The disordered stretch occupies residues 93–114; the sequence is KMHEGDEGPGHHHKPGLGEGTP. At His105 the chain carries Pros-methylhistidine. At Thr113 the chain carries Phosphothreonine; by MAPK14.

Homodimer. Preferentially exists as a heterodimer or heterotetramer with S100A8 known as calprotectin (S100A8/A9). S100A9 interacts with ATP2A2. S100A9 interacts with AGER, and with the heterodimeric complex formed by TLR4 and LY96 in the presence of calcium and/or zinc ions. S100A9 binds quinoline-3-carboxamides in the presence of calcium and/or zinc ions. S100A9 interacts with amyloid-beta protein 40. Calprotectin (S100A8/9) interacts with CEACAM3 and tubulin filaments in a calcium-dependent manner. Heterotetrameric calprotectin (S100A8/A9) interacts with ANXA6 and associates with tubulin filaments in activated monocytes. Calprotectin (S100A8/9) interacts with NCF2/P67PHOX, RAC1, RAC2, CYBA and CYBB. Calprotectin (S100A8/9) interacts with NOS2 to form the iNOS-S100A8/A9 transnitrosylase complex; induced by LDL(ox). Calprotectin (S100A8/9) interacts with CD69. Post-translationally, phosphorylated. Phosphorylation inhibits activation of tubulin polymerization. In terms of processing, S-nitrosylation of Cys-3 is implicated in LDL(ox)-induced S-nitrosylation of GAPDH at 'Cys-247' through a transnitrosylase mechanism involving a iNOS-S100A8/9 complex. Methylation at His-105 by METTL9 reduces zinc-binding without affecting heterodimerization with S100A8. Calprotectin (S100A8/9) is predominantly expressed in myeloid cells. Except for inflammatory conditions, the expression is restricted to a specific stage of myeloid differentiation since both proteins are expressed in circulating neutrophils and monocytes but are absent in normal tissue macrophages and lymphocytes. Under chronic inflammatory conditions, such as psoriasis and malignant disorders, also expressed in the epidermis. Found in high concentrations at local sites of inflammation or in the serum of patients with inflammatory diseases such as rheumatoid, cystic fibrosis, inflammatory bowel disease, Crohn's disease, giant cell arteritis, cystic fibrosis, Sjogren's syndrome, systemic lupus erythematosus, and progressive systemic sclerosis. Involved in the formation and deposition of amyloids in the aging prostate known as corpora amylacea inclusions. Strongly up-regulated in many tumors, including gastric, esophageal, colon, pancreatic, bladder, ovarian, thyroid, breast and skin cancers.

The protein resides in the secreted. It localises to the cytoplasm. It is found in the cytoskeleton. The protein localises to the cell membrane. S100A9 is a calcium- and zinc-binding protein which plays a prominent role in the regulation of inflammatory processes and immune response. It can induce neutrophil chemotaxis, adhesion, can increase the bactericidal activity of neutrophils by promoting phagocytosis via activation of SYK, PI3K/AKT, and ERK1/2 and can induce degranulation of neutrophils by a MAPK-dependent mechanism. Predominantly found as calprotectin (S100A8/A9) which has a wide plethora of intra- and extracellular functions. The intracellular functions include: facilitating leukocyte arachidonic acid trafficking and metabolism, modulation of the tubulin-dependent cytoskeleton during migration of phagocytes and activation of the neutrophilic NADPH-oxidase. Also participates in regulatory T-cell differentiation together with CD69. Activates NADPH-oxidase by facilitating the enzyme complex assembly at the cell membrane, transferring arachidonic acid, an essential cofactor, to the enzyme complex and S100A8 contributes to the enzyme assembly by directly binding to NCF2/P67PHOX. The extracellular functions involve pro-inflammatory, antimicrobial, oxidant-scavenging and apoptosis-inducing activities. Its pro-inflammatory activity includes recruitment of leukocytes, promotion of cytokine and chemokine production, and regulation of leukocyte adhesion and migration. Acts as an alarmin or a danger associated molecular pattern (DAMP) molecule and stimulates innate immune cells via binding to pattern recognition receptors such as Toll-like receptor 4 (TLR4) and receptor for advanced glycation endproducts (AGER). Binding to TLR4 and AGER activates the MAP-kinase and NF-kappa-B signaling pathways resulting in the amplification of the pro-inflammatory cascade. Has antimicrobial activity towards bacteria and fungi and exerts its antimicrobial activity probably via chelation of Zn(2+) which is essential for microbial growth. Can induce cell death via autophagy and apoptosis and this occurs through the cross-talk of mitochondria and lysosomes via reactive oxygen species (ROS) and the process involves BNIP3. Can regulate neutrophil number and apoptosis by an anti-apoptotic effect; regulates cell survival via ITGAM/ITGB and TLR4 and a signaling mechanism involving MEK-ERK. Its role as an oxidant scavenger has a protective role in preventing exaggerated tissue damage by scavenging oxidants. Can act as a potent amplifier of inflammation in autoimmunity as well as in cancer development and tumor spread. Has transnitrosylase activity; in oxidatively-modified low-densitity lipoprotein (LDL(ox))-induced S-nitrosylation of GAPDH on 'Cys-247' proposed to transfer the NO moiety from NOS2/iNOS to GAPDH via its own S-nitrosylated Cys-3. The iNOS-S100A8/A9 transnitrosylase complex is proposed to also direct selective inflammatory stimulus-dependent S-nitrosylation of multiple targets such as ANXA5, EZR, MSN and VIM by recognizing a [IL]-x-C-x-x-[DE] motif. This chain is Protein S100-A9, found in Homo sapiens (Human).